Reading from the N-terminus, the 88-residue chain is MALLDFFLSRKKNTASIAKERLQIIVAERRRSDAEPHYLPQLKRDILEVICKYVQIDPEMVTVQLEQKGDDISILELNVTLPEAEETK.

Belongs to the MinE family.

Functionally, prevents the cell division inhibition by proteins MinC and MinD at internal division sites while permitting inhibition at polar sites. This ensures cell division at the proper site by restricting the formation of a division septum at the midpoint of the long axis of the cell. This is Cell division topological specificity factor from Cronobacter sakazakii (strain ATCC BAA-894) (Enterobacter sakazakii).